We begin with the raw amino-acid sequence, 392 residues long: 23S rRNA (uracil(747)-C(5))-methyltransferase RlmC (392 aa).

Residues Cys4, Cys12, Cys15, and Cys93 each coordinate [4Fe-4S] cluster. Positions 218, 247, 275, and 321 each coordinate S-adenosyl-L-methionine. The active-site Nucleophile is Cys348.

The protein belongs to the class I-like SAM-binding methyltransferase superfamily. RNA M5U methyltransferase family. RlmC subfamily.

It carries out the reaction uridine(747) in 23S rRNA + S-adenosyl-L-methionine = 5-methyluridine(747) in 23S rRNA + S-adenosyl-L-homocysteine + H(+). In terms of biological role, catalyzes the formation of 5-methyl-uridine at position 747 (m5U747) in 23S rRNA. This chain is 23S rRNA (uracil(747)-C(5))-methyltransferase RlmC, found in Haemophilus influenzae (strain PittEE).